The sequence spans 273 residues: Putative pyruvate, phosphate dikinase regulatory protein (273 aa).

Gly-149–Thr-156 contacts ADP.

It belongs to the pyruvate, phosphate/water dikinase regulatory protein family. PDRP subfamily.

It catalyses the reaction N(tele)-phospho-L-histidyl/L-threonyl-[pyruvate, phosphate dikinase] + ADP = N(tele)-phospho-L-histidyl/O-phospho-L-threonyl-[pyruvate, phosphate dikinase] + AMP + H(+). The enzyme catalyses N(tele)-phospho-L-histidyl/O-phospho-L-threonyl-[pyruvate, phosphate dikinase] + phosphate + H(+) = N(tele)-phospho-L-histidyl/L-threonyl-[pyruvate, phosphate dikinase] + diphosphate. Bifunctional serine/threonine kinase and phosphorylase involved in the regulation of the pyruvate, phosphate dikinase (PPDK) by catalyzing its phosphorylation/dephosphorylation. The chain is Putative pyruvate, phosphate dikinase regulatory protein from Rickettsia rickettsii (strain Iowa).